Reading from the N-terminus, the 319-residue chain is Malate dehydrogenase (319 aa).

NAD(+)-binding positions include glycine 10 to glycine 15 and aspartate 34. Residues arginine 83 and arginine 89 each contribute to the substrate site. NAD(+) contacts are provided by residues asparagine 96 and isoleucine 119–asparagine 121. 2 residues coordinate substrate: asparagine 121 and arginine 152. The active-site Proton acceptor is the histidine 176.

Belongs to the LDH/MDH superfamily. MDH type 3 family.

It catalyses the reaction (S)-malate + NAD(+) = oxaloacetate + NADH + H(+). Its function is as follows. Catalyzes the reversible oxidation of malate to oxaloacetate. This Paramagnetospirillum magneticum (strain ATCC 700264 / AMB-1) (Magnetospirillum magneticum) protein is Malate dehydrogenase.